Reading from the N-terminus, the 140-residue chain is Pro-vaccinia growth factor (140 aa).

The first 18 residues, 1–18 (MLINYLMLLFAAMIIRSF), serve as a signal peptide directing secretion. Residues 19-100 (ADSGNAIETT…SEKPNTTTSY (82 aa)) are Extracellular-facing. N-linked (GlcNAc...) asparagine; by host glycosylation occurs at N34. One can recognise an EGF-like domain in the interval 41–81 (AIRLCGPEGDGYCLHGDCIHARDIDGMYCRCSHGYTGIRCQ). Disulfide bonds link C45-C58, C53-C69, and C71-C80. The N-linked (GlcNAc...) asparagine; by host glycan is linked to N95. The helical transmembrane segment at 101 to 121 (IPSPGIMLVLVGIIIITCCLL) threads the bilayer. Residues 122 to 140 (SVYRFTRRTKLPIQDMVVP) are Cytoplasmic-facing.

This sequence belongs to the orthopoxvirus OPG019 family. Interacts with host EGFR.

It localises to the host membrane. Its subcellular location is the secreted. Stimulates cellular proliferation (hyperplasia)and mobility around infected cells to promote rapid and efficient spread of infection. This effect is beneficial for virus replication in vivo, because poxviruses replicate possibly better in proliferating cells than in quiescent cells. Acts by binding host EGFR, inducing its dimerization, autophosphorylation and leading to activation of several cellular pathways regulating cell proliferation or cell survival. The activation by host EGFR of mitogen activated protein kinases (MAPK) and extracellular-signal regulated kinases (ERK) are essential for the positive effect of vaccinia growth factor on poxvirus virulence in vivo. The chain is Pro-vaccinia growth factor (OPG019) from Homo sapiens (Human).